The sequence spans 290 residues: L-fucono-1,5-lactonase (290 aa).

The protein belongs to the metallo-dependent hydrolases superfamily.

The catalysed reaction is L-fucono-1,5-lactone + H2O = L-fuconate + H(+). It carries out the reaction L-fucono-1,4-lactone + H2O = L-fuconate + H(+). The enzyme catalyses D-arabinono-1,4-lactone + H2O = D-arabinonate + H(+). It catalyses the reaction L-xylono-1,4-lactone + H2O = L-xylonate + H(+). The catalysed reaction is L-galactono-1,4-lactone + H2O = L-galactonate + H(+). In terms of biological role, catalyzes the hydrolysis of L-fucono-1,5-lactone to L-fuconate. Can also hydrolyze L-fucono-1,4-lactone, L-galactono-1,4-lactone D-arabinono-1,4-lactone and L-xylono-1,4-lactone. The sequence is that of L-fucono-1,5-lactonase from Burkholderia ambifaria (strain ATCC BAA-244 / DSM 16087 / CCUG 44356 / LMG 19182 / AMMD) (Burkholderia cepacia (strain AMMD)).